The sequence spans 138 residues: Transcription antitermination protein NusB (138 aa).

This sequence belongs to the NusB family.

Its function is as follows. Involved in transcription antitermination. Required for transcription of ribosomal RNA (rRNA) genes. Binds specifically to the boxA antiterminator sequence of the ribosomal RNA (rrn) operons. The polypeptide is Transcription antitermination protein NusB (Desulforudis audaxviator (strain MP104C)).